The sequence spans 135 residues: uncharacterized protein (135 aa).

Residues 1 to 80 (MRSSSLPGAR…QRGSCASANA (80 aa)) are disordered. Gly residues predominate over residues 54–65 (GARGGGRRGWGG).

This is an uncharacterized protein from Homo sapiens (Human).